Here is a 92-residue protein sequence, read N- to C-terminus: Cell division protein FtsB (92 aa).

Over 1–3 (MRL) the chain is Cytoplasmic. A helical transmembrane segment spans residues 4 to 21 (FVFFMLCLLVLLQYHLWF). At 22 to 92 (GKNGLGDRHN…TFFRIVPKED (71 aa)) the chain is on the periplasmic side. Residues 28–62 (DRHNLQEEVTLILENNSELRQRNQMMFSEIKDLKE) are a coiled coil.

It belongs to the FtsB family. Part of a complex composed of FtsB, FtsL and FtsQ.

Its subcellular location is the cell inner membrane. In terms of biological role, essential cell division protein. May link together the upstream cell division proteins, which are predominantly cytoplasmic, with the downstream cell division proteins, which are predominantly periplasmic. This is Cell division protein FtsB from Psychromonas ingrahamii (strain DSM 17664 / CCUG 51855 / 37).